The sequence spans 171 residues: S-ribosylhomocysteine lyase (171 aa).

Fe cation is bound by residues histidine 54, histidine 58, and cysteine 128.

The protein belongs to the LuxS family. In terms of assembly, homodimer. It depends on Fe cation as a cofactor.

It catalyses the reaction S-(5-deoxy-D-ribos-5-yl)-L-homocysteine = (S)-4,5-dihydroxypentane-2,3-dione + L-homocysteine. Its function is as follows. Involved in the synthesis of autoinducer 2 (AI-2) which is secreted by bacteria and is used to communicate both the cell density and the metabolic potential of the environment. The regulation of gene expression in response to changes in cell density is called quorum sensing. Catalyzes the transformation of S-ribosylhomocysteine (RHC) to homocysteine (HC) and 4,5-dihydroxy-2,3-pentadione (DPD). This chain is S-ribosylhomocysteine lyase, found in Shigella flexneri.